The chain runs to 181 residues: MSSMLVVARTYAQAIFDIAVEQKNINKWKSVLDLFSEISLNRLVQSLFFRCLEPKRLSDIFIAICEDYQKKQVDTFSKNIIYIMAENNRLLLLPIVFKEFTYLCSIYVHTVEIEIISAWPLKYNQLKKITDIMAKRLSKTVNPVHKVDKDILAGVIIRIGDTVIDGSIRGRIFRLNHVLQS.

It belongs to the ATPase delta chain family. As to quaternary structure, F-type ATPases have 2 components, F(1) - the catalytic core - and F(0) - the membrane proton channel. F(1) has five subunits: alpha(3), beta(3), gamma(1), delta(1), epsilon(1). F(0) has three main subunits: a(1), b(2) and c(10-14). The alpha and beta chains form an alternating ring which encloses part of the gamma chain. F(1) is attached to F(0) by a central stalk formed by the gamma and epsilon chains, while a peripheral stalk is formed by the delta and b chains.

The protein resides in the cell inner membrane. Functionally, f(1)F(0) ATP synthase produces ATP from ADP in the presence of a proton or sodium gradient. F-type ATPases consist of two structural domains, F(1) containing the extramembraneous catalytic core and F(0) containing the membrane proton channel, linked together by a central stalk and a peripheral stalk. During catalysis, ATP synthesis in the catalytic domain of F(1) is coupled via a rotary mechanism of the central stalk subunits to proton translocation. Its function is as follows. This protein is part of the stalk that links CF(0) to CF(1). It either transmits conformational changes from CF(0) to CF(1) or is implicated in proton conduction. The chain is ATP synthase subunit delta from Blochmanniella pennsylvanica (strain BPEN).